The chain runs to 445 residues: Ribosomal protein uS12 methylthiotransferase RimO (445 aa).

Residues 4–119 enclose the MTTase N-terminal domain; sequence IKVALVSLGC…LLESIKVFLK (116 aa). [4Fe-4S] cluster is bound by residues C13, C48, C82, C156, C160, and C163. The 231-residue stretch at 142 to 372 folds into the Radical SAM core domain; the sequence is TTPTYTAYVR…MILQQSISKD (231 aa). The TRAM domain occupies 375-441; that stretch reads KEKIGKIYEV…EYDLIGVVYN (67 aa).

This sequence belongs to the methylthiotransferase family. RimO subfamily. The cofactor is [4Fe-4S] cluster.

It localises to the cytoplasm. It catalyses the reaction L-aspartate(89)-[ribosomal protein uS12]-hydrogen + (sulfur carrier)-SH + AH2 + 2 S-adenosyl-L-methionine = 3-methylsulfanyl-L-aspartate(89)-[ribosomal protein uS12]-hydrogen + (sulfur carrier)-H + 5'-deoxyadenosine + L-methionine + A + S-adenosyl-L-homocysteine + 2 H(+). Its function is as follows. Catalyzes the methylthiolation of an aspartic acid residue of ribosomal protein uS12. The chain is Ribosomal protein uS12 methylthiotransferase RimO from Clostridium botulinum (strain Okra / Type B1).